The primary structure comprises 249 residues: Putative NAD(+)--arginine ADP-ribosyltransferase Vis (249 aa).

Positions 1–18 (MNTRFLLLLCCLSFTTFS) are cleaved as a signal peptide. A TR mART core domain is found at 31 to 223 (EEEVTQLAED…IGVETVKASA (193 aa)). Residues 68–80 (SISGYQTANDYLR), 117–120 (RGTW), and Glu137 contribute to the NAD(+) site. Residue Arg117 is part of the active site. Active-site residues include Ser142 and Glu191. Glu191 is an NAD(+) binding site.

Belongs to the Arg-specific ADP-ribosyltransferase family.

It localises to the secreted. The enzyme catalyses L-arginyl-[protein] + NAD(+) = N(omega)-(ADP-D-ribosyl)-L-arginyl-[protein] + nicotinamide + H(+). Functionally, a probable mono(ADP-ribosyl)transferase, it may ADP-ribosylate Arg in target protein(s). Upon expression in yeast cells causes cell death. The protein is Putative NAD(+)--arginine ADP-ribosyltransferase Vis of Vibrio splendidus (strain 12B01).